The following is a 206-amino-acid chain: Putative precorrin-2 dehydrogenase (206 aa).

NAD(+) contacts are provided by residues 20-21 (SV) and 41-46 (KEFDEE).

Belongs to the precorrin-2 dehydrogenase / sirohydrochlorin ferrochelatase family. Homodimer.

It carries out the reaction precorrin-2 + NAD(+) = sirohydrochlorin + NADH + 2 H(+). It functions in the pathway porphyrin-containing compound metabolism; siroheme biosynthesis; sirohydrochlorin from precorrin-2: step 1/1. Involved in the archaeal biosynthesis of heme. Catalyzes the oxiation of precorrin-2 into sirohydroclorin. This chain is Putative precorrin-2 dehydrogenase, found in Methanocaldococcus jannaschii (strain ATCC 43067 / DSM 2661 / JAL-1 / JCM 10045 / NBRC 100440) (Methanococcus jannaschii).